The sequence spans 1192 residues: MMDAEKVSTDGEAISEGEVGSNGETPPETEVEFIGETAPDTDVEFIGETSPGTDVEPTGESIQETEVESIGEATPGMDVEPIKKTMTELNVESIGEETSETDVDSIRKALRGIDLESITVAYPPKKAKHRKVRPQAEVESTGRAAPEGELEVSDHEKVEALLDELDELSEIVSSPEVSYSDISPLEMGEDDTNVSATSTDTFQQGIYEPIEPIEPTEPPEPAEPPKPAETPEDSTVRAPAHPYQRDFPMGARHRFRLSIMGSLTPSDTDDLPLETDEPPQQESVQSTPRALEETRIQFLDQVQSLSPEALLDRATEGSDEAEEEGSQLIVLDPDHPLMIRFQEALKGYLNRQMDKLKLDVQELDVATKQTRSQRQELGVNLYGVQQHLARLQMQLEKSHDRHSLVACERRRKEEELQCARSVYNKTCQTANEERKKLAALQTEVESLALHLFYMQNIEQDVRDDIQVMKQVVRKTETEKMHAEVEKKKQDLFVDQLTERSHQLEENIALFEAQYLSQAEDTRVLKKAVTEAITEIDTIAVEKKRILQQWTTSLVGMKHRNEAYKTVMDALRECQHQVKSTDSEIEVCKKSIMQEEEKNEKLARLLNRAETEATLVQKMTAQCLSKQEALQTEFNTYQLALQDTEEMLNKGYVEHSAVLSELQATRQAFHQEQELRQKMDMSMVDKLQEQGTSSKMTKYFHQLLRKLQKENTNLVTHLSKIDGDIAQATLDITNTNCKIDMHKKTLAEMDKEVKRFNDLITNSESEIARRTILIERKQSLINFFNKQLEQMVSELGGEEAGPLELEIKRLSKLTEEYNTGVAEAQMTWLRLQQELVQVTHEREEQLVSVDQLKKEVHIMEQKKLRIESKIAHEKKEQKIVSRHMRDLDNDLSKLNMLLDKNRCSSEELEQNNIATETEFLRTLKDSERETIQMQEKLMELSEEKATLLNSFMEAEHQIMLWEKKIQLAKEMRSSVDSETGQTEIRAMKAEIHRMKVRHGQLLKQQEKMIRDMELAVARRETIVVQAEGQSKIDKKVITKTEFHYQQRELQKKVREMHKATDDCTNTISELEETQKFLSSSLQEKQQLLSEMQATTDVLEEEINQLTALKRQNLLEIVTLQTRGKHLQAAIEGKYVFLHRNSRSQLMERKRLSVRLSQLNKVLSSVQEDYPQYQEVLQSIQQKIATKLETPEPS.

Disordered stretches follow at residues 1-78 (MMDA…PGMD), 126-153 (KAKH…LEVS), 173-196 (SSPE…NVSA), 211-246 (EPIE…YQRD), and 261-289 (GSLT…STPR). Residues 27–45 (PETEVEFIGETAPDTDVEF) show a composition bias toward acidic residues. The segment covering 215–228 (PTEPPEPAEPPKPA) has biased composition (pro residues). Over residues 267-279 (DTDDLPLETDEPP) the composition is skewed to acidic residues. Position 306 is a phosphoserine (Ser-306). Coiled coils occupy residues 308–369 (EALL…ATKQ), 425–451 (KTCQ…ALHL), 581–649 (DSEI…MLNK), 733–768 (NTNC…EIAR), 830–871 (LQQE…KIAH), 919–972 (LRTL…EMRS), and 1044–1118 (QQRE…IVTL).

Belongs to the CCDC40 family. As to expression, specifically expressed in the embryonic node and midline.

The protein localises to the cytoplasm. Its subcellular location is the cell projection. It is found in the cilium. In terms of biological role, required for assembly of dynein regulatory complex (DRC) and inner dynein arm (IDA) complexes, which are responsible for ciliary beat regulation, thereby playing a central role in motility in cilia and flagella. Probably acts together with CCDC39 to form a molecular ruler that determines the 96 nanometer (nm) repeat length and arrangements of components in cilia and flagella. Not required for outer dynein arm complexes assembly. Required for axonemal recruitment of CCDC39. The sequence is that of Coiled-coil domain-containing protein 40 from Mus musculus (Mouse).